The sequence spans 958 residues: Nuclear factor NF-kappa-B p100 subunit (958 aa).

The RHD domain occupies 40–230 (LLMSYLSIIE…DPIHDSKSPG (191 aa)). The Nuclear localization signal motif lies at 343-347 (RKRRK). 2 disordered regions span residues 350–374 (PTFN…SFGQ) and 411–442 (CSAT…QTDS). The segment at 352–390 (FNNHFYGGGSPMGGAPPGSSFGQGGGSNINYQYTGMNSA) is GRR. Over residues 357–374 (YGGGSPMGGAPPGSSFGQ) the composition is skewed to gly residues. Polar residues predominate over residues 412–425 (SATNSSEKNQQPSI). 6 ANK repeats span residues 500 to 529 (NGDT…SIPN), 539 to 568 (LQQT…DPTI), 572 to 603 (YGNS…QKNL), 610 to 639 (HGLS…NVNS), 644 to 674 (SGKS…DINA), and 678 to 707 (GGNT…NVLS). The disordered stretch occupies residues 705-766 (VLSENDEPVN…SAEEMHRREQ (62 aa)). Residues 724–734 (SESDSDVQMDT) are compositionally biased toward acidic residues. A compositionally biased stretch (basic and acidic residues) spans 753–766 (ECEHSAEEMHRREQ). The 87-residue stretch at 815–901 (VNVLALETNT…EGVELLCKSE (87 aa)) folds into the Death domain. Basic and acidic residues predominate over residues 904-916 (AKHHSPAESKNDS). The segment at 904–958 (AKHHSPAESKNDSAYESQSMEVDQSSGNLMDDSQKQTIPVSAAELCPTTEPTIGQ) is disordered. Residues 917–931 (AYESQSMEVDQSSGN) are compositionally biased toward polar residues.

In terms of assembly, active NF-kappa-B is a heterodimer of an about 52 kDa DNA-binding subunit and the weak DNA-binding subunit p65. Two heterodimers might form a labile tetramer. Post-translationally, while translation occurs, the particular unfolded structure after the GRR repeat promotes the generation of p52 making it an acceptable substrate for the proteasome. This process is known as cotranslational processing. The processed form is active and the unprocessed form acts as an inhibitor (I kappa B-like), being able to form cytosolic complexes with NF-kappa B, trapping it in the cytoplasm. Complete folding of the region downstream of the GRR repeat precludes processing. In terms of processing, constitutive processing is tightly suppressed by its C-terminal processing inhibitory domain, named PID, which contains the death domain. In terms of tissue distribution, expressed in spleen.

It is found in the nucleus. The protein resides in the cytoplasm. Functionally, appears to have dual functions such as cytoplasmic retention of attached NF-kappa-B proteins and generation of p52 by a cotranslational processing. The proteasome-mediated process ensures the production of both p52 and p100 and preserves their independent function. p52 binds to the kappa-B consensus sequence 5'-GGRNNYYCC-3', located in the enhancer region of genes involved in immune response and acute phase reactions. In concert with RELB, may play a role in the regulation of the circadian clock. This is Nuclear factor NF-kappa-B p100 subunit (nfkb2) from Xenopus laevis (African clawed frog).